Reading from the N-terminus, the 266-residue chain is Undecaprenyl-diphosphatase (266 aa).

The next 8 helical transmembrane spans lie at 4–24, 41–61, 79–99, 108–128, 143–163, 184–204, 220–240, and 243–263; these read LATI…PVSS, GSAA…LVAY, AVAF…VGAV, LESP…ILAI, MPLR…IPGV, AEFS…YSLW, IGLF…VAIV, and FGFA…LLWL.

The protein belongs to the UppP family.

It localises to the cell inner membrane. It carries out the reaction di-trans,octa-cis-undecaprenyl diphosphate + H2O = di-trans,octa-cis-undecaprenyl phosphate + phosphate + H(+). Its function is as follows. Catalyzes the dephosphorylation of undecaprenyl diphosphate (UPP). Confers resistance to bacitracin. The polypeptide is Undecaprenyl-diphosphatase (Sphingopyxis alaskensis (strain DSM 13593 / LMG 18877 / RB2256) (Sphingomonas alaskensis)).